We begin with the raw amino-acid sequence, 212 residues long: MKSSLTLLFLAAIGYTIAYPPPSDYDSGYGGGGGGGGGGGYGGWCGGSDCYGGGNGGGGGGGGGNGGEYGGGYGDVYGGSYGGGSYGGGGYGDVYGGGCGGPDCYGGGNGGGNGGGGGCNGGGCGGGPDFYGKGYEDSYGGDSYGNDYYGDSNGRKNGHGKGGKGGNGGGGGKGGGKGGGNGKGNGKGGGGKNGGGKGGNGGKGGSYAPSYY.

An N-terminal signal peptide occupies residues 1 to 27; it reads MKSSLTLLFLAAIGYTIAYPPPSDYDS. Residues 155–212 are disordered; that stretch reads RKNGHGKGGKGGNGGGGGKGGGKGGGNGKGNGKGGGGKNGGGKGGNGGKGGSYAPSYY. The segment covering 163-205 has biased composition (gly residues); sequence GKGGNGGGGGKGGGKGGGNGKGNGKGGGGKNGGGKGGNGGKGG.

In terms of tissue distribution, detected only in mature female parasites.

The protein is Eggshell protein 1 (ESG-1) of Schistosoma japonicum (Blood fluke).